The following is a 385-amino-acid chain: SH3 domain-binding protein 5-like (385 aa).

The segment at Met1–Pro58 is disordered. At Thr13 the chain carries Phosphothreonine. Positions Leu18–Pro28 are enriched in basic and acidic residues. Ser30 and Ser49 each carry phosphoserine. 2 coiled-coil regions span residues Arg59 to Ala140 and Trp169 to His272. Residues His272–Pro328 are disordered. The segment covering Glu318–Pro328 has biased composition (low complexity). Phosphoserine occurs at positions 343, 350, 358, and 362. The tract at residues Asp359–Leu385 is disordered. Residues Gly376–Leu385 are compositionally biased toward basic residues.

The protein belongs to the SH3BP5 family.

Functions as a guanine nucleotide exchange factor (GEF) for RAB11A. The sequence is that of SH3 domain-binding protein 5-like (SH3BP5L) from Bos taurus (Bovine).